Consider the following 92-residue polypeptide: Small ribosomal subunit protein uS19 (92 aa).

It belongs to the universal ribosomal protein uS19 family.

In terms of biological role, protein S19 forms a complex with S13 that binds strongly to the 16S ribosomal RNA. The protein is Small ribosomal subunit protein uS19 of Pectobacterium atrosepticum (strain SCRI 1043 / ATCC BAA-672) (Erwinia carotovora subsp. atroseptica).